A 544-amino-acid polypeptide reads, in one-letter code: Serine/threonine-protein kinase bur1 (544 aa).

A Protein kinase domain is found at 25–326 (FEFLGKLGEG…AIDALKHPYF (302 aa)). ATP is bound by residues 31–39 (LGEGTFGEV) and lysine 54. Aspartate 155 (proton acceptor) is an active-site residue. A disordered region spans residues 357–544 (AAMPPAPAGG…ERVDRGPYRR (188 aa)). The segment covering 374 to 403 (GGWSTNSGSRTGAETRNPRISSAARSQGNQ) has biased composition (polar residues). Basic and acidic residues-rich tracts occupy residues 419-438 (RGNE…HRDG), 456-466 (HSDKTGRDRGY), 488-511 (DRNR…DKSH), and 532-544 (NYRE…PYRR).

This sequence belongs to the protein kinase superfamily. CMGC Ser/Thr protein kinase family. CDC2/CDKX subfamily.

The protein localises to the nucleus. The catalysed reaction is L-seryl-[protein] + ATP = O-phospho-L-seryl-[protein] + ADP + H(+). It catalyses the reaction L-threonyl-[protein] + ATP = O-phospho-L-threonyl-[protein] + ADP + H(+). It carries out the reaction [DNA-directed RNA polymerase] + ATP = phospho-[DNA-directed RNA polymerase] + ADP + H(+). Serine/threonine-protein kinase involved in transcription regulation. Phosphorylates the UBC2/RAD6 ubiquitin-conjugating enzyme (E2), leading to monoubiquitination of histone H2B and the silencing of telomeric-associated genes. Also required for histone H3 methylation. Necessary for the recovery from pheromone-induced growth arrest in the cell cycle G1 phase. This Emericella nidulans (strain FGSC A4 / ATCC 38163 / CBS 112.46 / NRRL 194 / M139) (Aspergillus nidulans) protein is Serine/threonine-protein kinase bur1 (ptkA).